The following is a 256-amino-acid chain: Small ribosomal subunit protein eS1 (256 aa).

N-acetylalanine; partial is present on alanine 2.

This sequence belongs to the eukaryotic ribosomal protein eS1 family. Component of the small ribosomal subunit. Mature ribosomes consist of a small (40S) and a large (60S) subunit. The 40S subunit contains about 33 different proteins and 1 molecule of RNA (18S). The 60S subunit contains about 49 different proteins and 3 molecules of RNA (25S, 5.8S and 5S).

Its subcellular location is the cytoplasm. The sequence is that of Small ribosomal subunit protein eS1 from Candida albicans (strain SC5314 / ATCC MYA-2876) (Yeast).